The sequence spans 968 residues: RNA polymerase-associated protein RapA (968 aa).

One can recognise a Helicase ATP-binding domain in the interval 164-334 (EVGQRHAPRV…FARLRLLDPN (171 aa)). ATP is bound at residue 177–184 (DEVGLGKT). The DEAH box signature appears at 280-283 (DEAH). Residues 493–644 (WLVDFLLDLR…TCPTGRALYD (152 aa)) enclose the Helicase C-terminal domain.

It belongs to the SNF2/RAD54 helicase family. RapA subfamily. In terms of assembly, interacts with the RNAP. Has a higher affinity for the core RNAP than for the holoenzyme. Its ATPase activity is stimulated by binding to RNAP.

In terms of biological role, transcription regulator that activates transcription by stimulating RNA polymerase (RNAP) recycling in case of stress conditions such as supercoiled DNA or high salt concentrations. Probably acts by releasing the RNAP, when it is trapped or immobilized on tightly supercoiled DNA. Does not activate transcription on linear DNA. Probably not involved in DNA repair. In Sodalis glossinidius (strain morsitans), this protein is RNA polymerase-associated protein RapA.